We begin with the raw amino-acid sequence, 418 residues long: 3-isopropylmalate dehydratase large subunit (418 aa).

[4Fe-4S] cluster-binding residues include Cys298, Cys358, and Cys361.

This sequence belongs to the aconitase/IPM isomerase family. LeuC type 2 subfamily. As to quaternary structure, heterodimer of LeuC and LeuD. Requires [4Fe-4S] cluster as cofactor.

It carries out the reaction (2R,3S)-3-isopropylmalate = (2S)-2-isopropylmalate. The protein operates within amino-acid biosynthesis; L-leucine biosynthesis; L-leucine from 3-methyl-2-oxobutanoate: step 2/4. Its function is as follows. Catalyzes the isomerization between 2-isopropylmalate and 3-isopropylmalate, via the formation of 2-isopropylmaleate. This Caldanaerobacter subterraneus subsp. tengcongensis (strain DSM 15242 / JCM 11007 / NBRC 100824 / MB4) (Thermoanaerobacter tengcongensis) protein is 3-isopropylmalate dehydratase large subunit.